The primary structure comprises 147 residues: Protein phosphatase 1 regulatory subunit 14A (147 aa).

Over residues 1-11 (MAAQRLGKRVL) the composition is skewed to basic residues. The disordered stretch occupies residues 1 to 37 (MAAQRLGKRVLSKLQSPSRARGPGGSPSGLQKRHARV). A Phosphoserine modification is found at serine 26. Residues 35-120 (ARVTVKYDRR…LLAKLRGLHK (86 aa)) form an inhibitory region. Threonine 38 bears the Phosphothreonine mark. Residues 118-147 (LHKQPGFPQPSPSDDPSLSPRQDPAHTAPP) form a disordered region. A phosphoserine mark is found at serine 128, serine 134, and serine 136.

This sequence belongs to the PP1 inhibitor family.

The protein resides in the cytoplasm. Functionally, inhibitor of PPP1CA. Has over 1000-fold higher inhibitory activity when phosphorylated, creating a molecular switch for regulating the phosphorylation status of PPP1CA substrates and smooth muscle contraction. The chain is Protein phosphatase 1 regulatory subunit 14A (Ppp1r14a) from Rattus norvegicus (Rat).